Reading from the N-terminus, the 508-residue chain is Zinc finger CCCH-type with G patch domain-containing protein (508 aa).

Residues 154-177 (PCNYYLEGECRFDETRCRYSHGAL) form a C3H1-type zinc finger. Positions 253-279 (DDELSSDSEETNETDGSDAANESDMDD) are disordered. The G-patch domain maps to 309–355 (TRGIGSKLMASMGYIHGTGLGSDGRGIVTPVSAQILPQGRSLDACME). The span at 486-495 (QAQESSLSKE) shows a compositional bias: polar residues. Positions 486–508 (QAQESSLSKEQQTRKSKNKMFEF) are disordered. The segment covering 499-508 (RKSKNKMFEF) has biased composition (basic residues).

The protein localises to the nucleus. Functionally, transcription repressor. This is Zinc finger CCCH-type with G patch domain-containing protein from Drosophila virilis (Fruit fly).